The chain runs to 449 residues: Sensor protein QseC (449 aa).

Residues 1–12 (MKFTQRLSLRVR) are Cytoplasmic-facing. A helical transmembrane segment spans residues 13 to 33 (LTLIFLILASVTWLLSSFVAW). Residues 34-156 (KQTTDNVDEL…QEWEYREDMA (123 aa)) lie on the Periplasmic side of the membrane. A helical transmembrane segment spans residues 157–177 (LAIVAGQLIPWLVALPIMLII). Over 178-449 (MMVLLGRELA…QGGFEAKVSW (272 aa)) the chain is Cytoplasmic. The region spanning 243 to 449 (DAAHELRSPL…QGGFEAKVSW (207 aa)) is the Histidine kinase domain. H246 is modified (phosphohistidine; by autocatalysis).

It localises to the cell inner membrane. The catalysed reaction is ATP + protein L-histidine = ADP + protein N-phospho-L-histidine.. Member of a two-component regulatory system QseB/QseC. Activates the flagella regulon by activating transcription of FlhDC. May activate QseB by phosphorylation. In Escherichia coli (strain K12), this protein is Sensor protein QseC (qseC).